Reading from the N-terminus, the 73-residue chain is UPF0154 protein BCG9842_B1526 (73 aa).

The helical transmembrane segment at 3–23 (IWLGILVGVVALVAGVALGFF) threads the bilayer.

The protein belongs to the UPF0154 family.

It is found in the cell membrane. In Bacillus cereus (strain G9842), this protein is UPF0154 protein BCG9842_B1526.